Here is a 1534-residue protein sequence, read N- to C-terminus: DNA polymerase alpha catalytic subunit (1534 aa).

Residues Met1 to Gly12 show a composition bias toward low complexity. Disordered stretches follow at residues Met1–Val23, Thr96–Ala141, and Phe864–Tyr905. Basic residues predominate over residues Arg116–Ser125. Residues Arg127–Ala141 are compositionally biased toward low complexity. Composition is skewed to basic and acidic residues over residues Phe864 to Glu882 and Asp889 to Lys898. Zn(2+) contacts are provided by Cys1340, Cys1343, Cys1383, Cys1386, Cys1422, Cys1427, Cys1448, and Cys1454. The segment at Cys1340 to Cys1386 adopts a CysA-type zinc-finger fold. A CysB motif motif is present at residues Cys1422–Tyr1451.

The protein belongs to the DNA polymerase type-B family.

The protein resides in the nucleus. The enzyme catalyses DNA(n) + a 2'-deoxyribonucleoside 5'-triphosphate = DNA(n+1) + diphosphate. Its function is as follows. Polymerase alpha in a complex with DNA primase is a replicative polymerase. This chain is DNA polymerase alpha catalytic subunit, found in Oryza sativa subsp. japonica (Rice).